The primary structure comprises 878 residues: Alanine--tRNA ligase (878 aa).

Zn(2+) is bound by residues H562, H566, C670, and H674.

Belongs to the class-II aminoacyl-tRNA synthetase family. Requires Zn(2+) as cofactor.

It localises to the cytoplasm. The catalysed reaction is tRNA(Ala) + L-alanine + ATP = L-alanyl-tRNA(Ala) + AMP + diphosphate. In terms of biological role, catalyzes the attachment of alanine to tRNA(Ala) in a two-step reaction: alanine is first activated by ATP to form Ala-AMP and then transferred to the acceptor end of tRNA(Ala). Also edits incorrectly charged Ser-tRNA(Ala) and Gly-tRNA(Ala) via its editing domain. This chain is Alanine--tRNA ligase, found in Acinetobacter baumannii (strain ACICU).